The primary structure comprises 57 residues: Ribosome modulation factor 2 (57 aa).

Residues 1–24 (MKRQKRDKLGRAHSNGYQAGLGGK) form a disordered region.

It belongs to the ribosome modulation factor family.

Its subcellular location is the cytoplasm. In terms of biological role, during stationary phase, converts 70S ribosomes to an inactive dimeric form (100S ribosomes). The chain is Ribosome modulation factor 2 from Colwellia psychrerythraea (strain 34H / ATCC BAA-681) (Vibrio psychroerythus).